We begin with the raw amino-acid sequence, 755 residues long: Biodegradative arginine decarboxylase (755 aa).

Lys-386 bears the N6-(pyridoxal phosphate)lysine mark.

The protein belongs to the Orn/Lys/Arg decarboxylase class-I family. Homodecamer. The basic unit is a homodimer, organized into a ring of giving a pentamer of five homodimers. It depends on pyridoxal 5'-phosphate as a cofactor.

It is found in the cytoplasm. The catalysed reaction is L-arginine + H(+) = agmatine + CO2. With respect to regulation, homodimers are probably inactive, their assembly into a homodecamer at low pH requires neutralization of negatively charged residues. This uses cytoplasmic protons, contributing pH regulation and stabilizes the homodecamer. Its function is as follows. Component of the acid-resistance (AR) system allowing enteric pathogens to survive the acidic environment in the stomach. ADC can be found in two forms: biodegradative (this enzyme) and biosynthetic (speA). The biodegradative form plays a role in regulating pH by consuming proteins. Converts arginine imported by AdiC to agmatine which is then exported by AdiC. The polypeptide is Biodegradative arginine decarboxylase (adiA) (Escherichia coli (strain K12)).